Consider the following 1229-residue polypeptide: Phosphorylase b kinase regulatory subunit alpha, liver isoform (1229 aa).

Residues 625 to 646 are compositionally biased toward acidic residues; sequence DSLLEDDEEQEEEEEDKFEDDY. The disordered stretch occupies residues 625-648; it reads DSLLEDDEEQEEEEEDKFEDDYNN. A calmodulin-binding region spans residues 825–855; it reads LEELYIQAGACKEWGLIRYISGILRKRVEVL. Residues 1024-1050 form a disordered region; sequence EIKQRCSSPSTPSGILSPVGPGPADGQ. Positions 1028–1037 are enriched in polar residues; it reads RCSSPSTPSG. The calmodulin-binding stretch occupies residues 1052-1092; the sequence is HWVERQGQWLRRRRLDGAINRVPVGFYQKVWKILQKCHGLS. The S-farnesyl cysteine moiety is linked to residue C1226.

It belongs to the phosphorylase b kinase regulatory chain family. As to quaternary structure, polymer of 16 chains, four each of alpha, beta, gamma, and delta. Alpha and beta are regulatory chains, gamma is the catalytic chain, and delta is calmodulin. Post-translationally, although the final Cys may be farnesylated, the terminal tripeptide is probably not removed, and the C-terminus is not methylated.

The protein localises to the cell membrane. Its pathway is glycan biosynthesis; glycogen metabolism. With respect to regulation, by phosphorylation of various serine residues and by calcium. In terms of biological role, phosphorylase b kinase catalyzes the phosphorylation of serine in certain substrates, including troponin I. The alpha chain may bind calmodulin. The polypeptide is Phosphorylase b kinase regulatory subunit alpha, liver isoform (phka2) (Takifugu rubripes (Japanese pufferfish)).